The following is a 304-amino-acid chain: tRNA uridine(34) hydroxylase (304 aa).

One can recognise a Rhodanese domain in the interval 124-219 (QDEETLLIDT…YLETIPKEDS (96 aa)). C179 (cysteine persulfide intermediate) is an active-site residue.

The protein belongs to the TrhO family.

It carries out the reaction uridine(34) in tRNA + AH2 + O2 = 5-hydroxyuridine(34) in tRNA + A + H2O. Functionally, catalyzes oxygen-dependent 5-hydroxyuridine (ho5U) modification at position 34 in tRNAs. This Bartonella henselae (strain ATCC 49882 / DSM 28221 / CCUG 30454 / Houston 1) (Rochalimaea henselae) protein is tRNA uridine(34) hydroxylase.